The chain runs to 459 residues: Ribulose bisphosphate carboxylase large chain (459 aa).

Position 4 is an N6,N6,N6-trimethyllysine (lysine 4). Asparagine 113 and threonine 163 together coordinate substrate. The Proton acceptor role is filled by lysine 165. Substrate is bound at residue lysine 167. 3 residues coordinate Mg(2+): lysine 191, aspartate 193, and glutamate 194. An N6-carboxylysine modification is found at lysine 191. The active-site Proton acceptor is histidine 284. 3 residues coordinate substrate: arginine 285, histidine 317, and serine 369.

Belongs to the RuBisCO large chain family. Type I subfamily. As to quaternary structure, heterohexadecamer of 8 large chains and 8 small chains; disulfide-linked. The disulfide link is formed within the large subunit homodimers. The cofactor is Mg(2+). The disulfide bond which can form in the large chain dimeric partners within the hexadecamer appears to be associated with oxidative stress and protein turnover.

The protein localises to the plastid. Its subcellular location is the chloroplast. It carries out the reaction 2 (2R)-3-phosphoglycerate + 2 H(+) = D-ribulose 1,5-bisphosphate + CO2 + H2O. It catalyses the reaction D-ribulose 1,5-bisphosphate + O2 = 2-phosphoglycolate + (2R)-3-phosphoglycerate + 2 H(+). In terms of biological role, ruBisCO catalyzes two reactions: the carboxylation of D-ribulose 1,5-bisphosphate, the primary event in carbon dioxide fixation, as well as the oxidative fragmentation of the pentose substrate in the photorespiration process. Both reactions occur simultaneously and in competition at the same active site. This is Ribulose bisphosphate carboxylase large chain from Ceratopetalum gummiferum (New South Wales Christmas bush).